The sequence spans 314 residues: DNA-directed RNA polymerase subunit alpha (314 aa).

The interval methionine 1 to threonine 228 is alpha N-terminal domain (alpha-NTD). Residues lysine 245 to glutamate 314 form an alpha C-terminal domain (alpha-CTD) region.

It belongs to the RNA polymerase alpha chain family. In terms of assembly, homodimer. The RNAP catalytic core consists of 2 alpha, 1 beta, 1 beta' and 1 omega subunit. When a sigma factor is associated with the core the holoenzyme is formed, which can initiate transcription.

It carries out the reaction RNA(n) + a ribonucleoside 5'-triphosphate = RNA(n+1) + diphosphate. DNA-dependent RNA polymerase catalyzes the transcription of DNA into RNA using the four ribonucleoside triphosphates as substrates. In Shouchella clausii (strain KSM-K16) (Alkalihalobacillus clausii), this protein is DNA-directed RNA polymerase subunit alpha.